An 86-amino-acid polypeptide reads, in one-letter code: Small ribosomal subunit protein bS16 (86 aa).

Belongs to the bacterial ribosomal protein bS16 family.

The sequence is that of Small ribosomal subunit protein bS16 from Carboxydothermus hydrogenoformans (strain ATCC BAA-161 / DSM 6008 / Z-2901).